A 212-amino-acid polypeptide reads, in one-letter code: Leucyl/phenylalanyl-tRNA--protein transferase (212 aa).

The protein belongs to the L/F-transferase family.

It localises to the cytoplasm. The catalysed reaction is N-terminal L-lysyl-[protein] + L-leucyl-tRNA(Leu) = N-terminal L-leucyl-L-lysyl-[protein] + tRNA(Leu) + H(+). It catalyses the reaction N-terminal L-arginyl-[protein] + L-leucyl-tRNA(Leu) = N-terminal L-leucyl-L-arginyl-[protein] + tRNA(Leu) + H(+). It carries out the reaction L-phenylalanyl-tRNA(Phe) + an N-terminal L-alpha-aminoacyl-[protein] = an N-terminal L-phenylalanyl-L-alpha-aminoacyl-[protein] + tRNA(Phe). Functionally, functions in the N-end rule pathway of protein degradation where it conjugates Leu, Phe and, less efficiently, Met from aminoacyl-tRNAs to the N-termini of proteins containing an N-terminal arginine or lysine. The protein is Leucyl/phenylalanyl-tRNA--protein transferase of Allorhizobium ampelinum (strain ATCC BAA-846 / DSM 112012 / S4) (Agrobacterium vitis (strain S4)).